The chain runs to 390 residues: Zinc transporter 7-B (390 aa).

Topologically, residues 1-37 are cytoplasmic; it reads MLPLSIKDDEYKPPKFNLVRKVSGWIRSIFSDSTSRN. The helical transmembrane segment at 38–58 threads the bilayer; it reads LFCFLCLNLSFAFVELFYGIW. Topologically, residues 59–67 are lumenal; the sequence is SNSLGLISD. Residues 68–88 form a helical membrane-spanning segment; sequence SFHMFFDCTALLAGLAASVIS. At 89–102 the chain is on the cytoplasmic side; it reads RWKTNETFSYGYVR. The chain crosses the membrane as a helical span at residues 103-123; it reads AEVLAGFVNGLFLIFTAFFIF. Topologically, residues 124-140 are lumenal; the sequence is SEGIERALDTPEVHHER. A helical membrane pass occupies residues 141-161; the sequence is LLPVSIMGFLVNLIGIFVFQH. The interval 161-226 is his-rich loop; the sequence is HGGGHGHSHE…GHDHSHKHGH (66 aa). At 162–250 the chain is on the cytoplasmic side; it reads GGGHGHSHES…KGSSKQILEG (89 aa). The disordered stretch occupies residues 166-243; it reads GHSHESGHGH…DEPPEENKGS (78 aa). The segment covering 187-201 has biased composition (basic residues); the sequence is GHSHSHGGGHGHSHG. Basic and acidic residues-rich tracts occupy residues 202–218 and 232–242; these read GGHE…EHGH and CHDEPPEENKG. A helical membrane pass occupies residues 251 to 271; it reads VFLHIVADALGSVGVIISTIL. At 272-276 the chain is on the lumenal side; the sequence is MQQYG. The chain crosses the membrane as a helical span at residues 277–297; the sequence is LMIADPICSMLIALLIFVSVI. The Cytoplasmic portion of the chain corresponds to 298–390; that stretch reads PLLKQSIGIL…LYVQIDLAAM (93 aa).

This sequence belongs to the cation diffusion facilitator (CDF) transporter (TC 2.A.4) family. SLC30A subfamily. As to quaternary structure, homooligomer.

It is found in the golgi apparatus membrane. It localises to the cytoplasmic vesicle. The protein localises to the golgi apparatus. Its subcellular location is the trans-Golgi network. The protein resides in the sarcoplasmic reticulum. It is found in the mitochondrion. It carries out the reaction Zn(2+)(in) = Zn(2+)(out). Functionally, zinc ion transporter mediating zinc entry from the cytosol into the lumen of organelles along the secretory pathway. By contributing to zinc ion homeostasis within the early secretory pathway, regulates the activation and folding of enzymes like alkaline phosphatases. The sequence is that of Zinc transporter 7-B (slc30a7-b) from Xenopus laevis (African clawed frog).